Consider the following 84-residue polypeptide: Small ribosomal subunit protein bS20 (84 aa).

Residues 1–28 (MPNIKSAIKRVKTADTRNSRNASQRSAM) form a disordered region.

Belongs to the bacterial ribosomal protein bS20 family.

In terms of biological role, binds directly to 16S ribosomal RNA. The protein is Small ribosomal subunit protein bS20 of Listeria welshimeri serovar 6b (strain ATCC 35897 / DSM 20650 / CCUG 15529 / CIP 8149 / NCTC 11857 / SLCC 5334 / V8).